A 587-amino-acid chain; its full sequence is 2-succinyl-5-enolpyruvyl-6-hydroxy-3-cyclohexene-1-carboxylate synthase (587 aa).

The protein belongs to the TPP enzyme family. MenD subfamily. Homodimer. Mg(2+) is required as a cofactor. It depends on Mn(2+) as a cofactor. Requires thiamine diphosphate as cofactor.

It carries out the reaction isochorismate + 2-oxoglutarate + H(+) = 5-enolpyruvoyl-6-hydroxy-2-succinyl-cyclohex-3-ene-1-carboxylate + CO2. It participates in quinol/quinone metabolism; 1,4-dihydroxy-2-naphthoate biosynthesis; 1,4-dihydroxy-2-naphthoate from chorismate: step 2/7. It functions in the pathway cofactor biosynthesis; phylloquinone biosynthesis. Catalyzes the thiamine diphosphate-dependent decarboxylation of 2-oxoglutarate and the subsequent addition of the resulting succinic semialdehyde-thiamine pyrophosphate anion to isochorismate to yield 2-succinyl-5-enolpyruvyl-6-hydroxy-3-cyclohexene-1-carboxylate (SEPHCHC). The chain is 2-succinyl-5-enolpyruvyl-6-hydroxy-3-cyclohexene-1-carboxylate synthase from Prochlorococcus marinus (strain MIT 9215).